The sequence spans 271 residues: ATP synthase subunit a (271 aa).

5 consecutive transmembrane segments (helical) span residues 38 to 58 (FWTL…LFLA), 100 to 120 (LIAP…LMDL), 146 to 166 (DVNI…FYSI), 220 to 240 (LIFI…LNVP), and 242 to 262 (AIFH…LTIV).

The protein belongs to the ATPase A chain family. As to quaternary structure, F-type ATPases have 2 components, CF(1) - the catalytic core - and CF(0) - the membrane proton channel. CF(1) has five subunits: alpha(3), beta(3), gamma(1), delta(1), epsilon(1). CF(0) has three main subunits: a(1), b(2) and c(9-12). The alpha and beta chains form an alternating ring which encloses part of the gamma chain. CF(1) is attached to CF(0) by a central stalk formed by the gamma and epsilon chains, while a peripheral stalk is formed by the delta and b chains.

The protein resides in the cell inner membrane. Its function is as follows. Key component of the proton channel; it plays a direct role in the translocation of protons across the membrane. This Enterobacter sp. (strain 638) protein is ATP synthase subunit a.